Consider the following 235-residue polypeptide: Ribonuclease PH (235 aa).

Phosphate-binding positions include Arg-86 and 124-126; that span reads GTR.

Belongs to the RNase PH family. Homohexameric ring arranged as a trimer of dimers.

It carries out the reaction tRNA(n+1) + phosphate = tRNA(n) + a ribonucleoside 5'-diphosphate. Functionally, phosphorolytic 3'-5' exoribonuclease that plays an important role in tRNA 3'-end maturation. Removes nucleotide residues following the 3'-CCA terminus of tRNAs; can also add nucleotides to the ends of RNA molecules by using nucleoside diphosphates as substrates, but this may not be physiologically important. Probably plays a role in initiation of 16S rRNA degradation (leading to ribosome degradation) during starvation. This Francisella tularensis subsp. tularensis (strain FSC 198) protein is Ribonuclease PH.